Consider the following 122-residue polypeptide: Large ribosomal subunit protein uL14 (122 aa).

This sequence belongs to the universal ribosomal protein uL14 family. In terms of assembly, part of the 50S ribosomal subunit. Forms a cluster with proteins L3 and L19. In the 70S ribosome, L14 and L19 interact and together make contacts with the 16S rRNA in bridges B5 and B8.

Its function is as follows. Binds to 23S rRNA. Forms part of two intersubunit bridges in the 70S ribosome. The chain is Large ribosomal subunit protein uL14 from Chlorobium limicola (strain DSM 245 / NBRC 103803 / 6330).